The following is a 231-amino-acid chain: MTYRRIPLYLSCLFLLALSGCNSKRPPLVEIPEPLEELQTMSPATRQAGSLWDSNQNSLFSDRKASNVGDIVTVLIEEKSSASKNASTKTGKDSSIGASIPNLFGLEKSSIIANNHIDMNNLIGASFKNDFKGAGSTSRSGTLSAALSTQVIVKYPNGQLKIRGGKEVMVNNEVQVIYLTGIIRPVDITAANTINSDKILNARISYTGKGALGDKQEPGWLTRSLDHVWPF.

A signal peptide spans 1–20; it reads MTYRRIPLYLSCLFLLALSG. C21 carries the N-palmitoyl cysteine lipid modification. A lipid anchor (S-diacylglycerol cysteine) is attached at C21.

Belongs to the FlgH family. The basal body constitutes a major portion of the flagellar organelle and consists of four rings (L,P,S, and M) mounted on a central rod.

It is found in the cell outer membrane. It localises to the bacterial flagellum basal body. In terms of biological role, assembles around the rod to form the L-ring and probably protects the motor/basal body from shearing forces during rotation. The chain is Flagellar L-ring protein from Desulfotalea psychrophila (strain LSv54 / DSM 12343).